The primary structure comprises 897 residues: Protein translocase subunit SecA (897 aa).

Residues Gln89, 107 to 111 (GEGKT), and Asp517 contribute to the ATP site. Residues 839-856 (DDAQATHSNPNEQTKQAS) are compositionally biased toward polar residues. The segment at 839-897 (DDAQATHSNPNEQTKQASITNNIQTQTDQQNTYQRKEKKVGRNEPCPCGSGKKYKKCHG) is disordered. The segment covering 857 to 870 (ITNNIQTQTDQQNT) has biased composition (low complexity). The Zn(2+) site is built by Cys884, Cys886, Cys895, and His896.

Belongs to the SecA family. As to quaternary structure, monomer and homodimer. Part of the essential Sec protein translocation apparatus which comprises SecA, SecYEG and auxiliary proteins SecDF-YajC and YidC. It depends on Zn(2+) as a cofactor.

It localises to the cell inner membrane. The protein localises to the cytoplasm. It carries out the reaction ATP + H2O + cellular proteinSide 1 = ADP + phosphate + cellular proteinSide 2.. Its function is as follows. Part of the Sec protein translocase complex. Interacts with the SecYEG preprotein conducting channel. Has a central role in coupling the hydrolysis of ATP to the transfer of proteins into and across the cell membrane, serving as an ATP-driven molecular motor driving the stepwise translocation of polypeptide chains across the membrane. This chain is Protein translocase subunit SecA, found in Vesicomyosocius okutanii subsp. Calyptogena okutanii (strain HA).